Here is a 64-residue protein sequence, read N- to C-terminus: Conotoxin Im11.1 (64 aa).

The first 26 residues, 1–26 (MMFRLTSVSCFLLVIACLNLVVLTNA), serve as a signal peptide directing secretion. 4 disulfide bridges follow: cysteine 27–cysteine 41, cysteine 34–cysteine 46, cysteine 40–cysteine 50, and cysteine 45–cysteine 54. At asparagine 57 the chain carries Asparagine amide. Residues 61-64 (ATFQ) constitute a propeptide that is removed on maturation.

Belongs to the conotoxin I2 superfamily. Expressed by the venom duct.

The protein localises to the secreted. The sequence is that of Conotoxin Im11.1 from Conus imperialis (Imperial cone).